A 491-amino-acid polypeptide reads, in one-letter code: Aspartyl/glutamyl-tRNA(Asn/Gln) amidotransferase subunit B (491 aa).

It belongs to the GatB/GatE family. GatB subfamily. In terms of assembly, heterotrimer of A, B and C subunits.

The catalysed reaction is L-glutamyl-tRNA(Gln) + L-glutamine + ATP + H2O = L-glutaminyl-tRNA(Gln) + L-glutamate + ADP + phosphate + H(+). It catalyses the reaction L-aspartyl-tRNA(Asn) + L-glutamine + ATP + H2O = L-asparaginyl-tRNA(Asn) + L-glutamate + ADP + phosphate + 2 H(+). Its function is as follows. Allows the formation of correctly charged Asn-tRNA(Asn) or Gln-tRNA(Gln) through the transamidation of misacylated Asp-tRNA(Asn) or Glu-tRNA(Gln) in organisms which lack either or both of asparaginyl-tRNA or glutaminyl-tRNA synthetases. The reaction takes place in the presence of glutamine and ATP through an activated phospho-Asp-tRNA(Asn) or phospho-Glu-tRNA(Gln). This Prochlorococcus marinus (strain NATL1A) protein is Aspartyl/glutamyl-tRNA(Asn/Gln) amidotransferase subunit B.